The sequence spans 137 residues: Phosphatidylinositol N-acetylglucosaminyltransferase subunit P (137 aa).

Transmembrane regions (helical) follow at residues 16 to 36 (VYGF…LIWG) and 58 to 78 (MAMP…YIGL).

The protein belongs to the PIGP family.

The protein localises to the membrane. It carries out the reaction a 1,2-diacyl-sn-glycero-3-phospho-(1D-myo-inositol) + UDP-N-acetyl-alpha-D-glucosamine = a 6-(N-acetyl-alpha-D-glucosaminyl)-1-(1,2-diacyl-sn-glycero-3-phospho)-1D-myo-inositol + UDP + H(+). The protein operates within glycolipid biosynthesis; glycosylphosphatidylinositol-anchor biosynthesis. In terms of biological role, part of the complex catalyzing the transfer of N-acetylglucosamine from UDP-N-acetylglucosamine to phosphatidylinositol, the first step of GPI biosynthesis. The chain is Phosphatidylinositol N-acetylglucosaminyltransferase subunit P from Arabidopsis thaliana (Mouse-ear cress).